The primary structure comprises 89 residues: MVMTPEKKKEIIEGFKVHSADTGSPEVQIALLSERISYLTEHFKMHKKDHHSRRGLLKLVGQRRQLLNYLKKKNAERYNNVIERLGLRR.

This sequence belongs to the universal ribosomal protein uS15 family. As to quaternary structure, part of the 30S ribosomal subunit. Forms a bridge to the 50S subunit in the 70S ribosome, contacting the 23S rRNA.

Its function is as follows. One of the primary rRNA binding proteins, it binds directly to 16S rRNA where it helps nucleate assembly of the platform of the 30S subunit by binding and bridging several RNA helices of the 16S rRNA. Functionally, forms an intersubunit bridge (bridge B4) with the 23S rRNA of the 50S subunit in the ribosome. This chain is Small ribosomal subunit protein uS15, found in Syntrophobacter fumaroxidans (strain DSM 10017 / MPOB).